We begin with the raw amino-acid sequence, 645 residues long: Fructose-1,6-bisphosphatase class 3 (645 aa).

This sequence belongs to the FBPase class 3 family. Requires Mn(2+) as cofactor.

It carries out the reaction beta-D-fructose 1,6-bisphosphate + H2O = beta-D-fructose 6-phosphate + phosphate. The protein operates within carbohydrate biosynthesis; gluconeogenesis. The polypeptide is Fructose-1,6-bisphosphatase class 3 (Fusobacterium nucleatum subsp. nucleatum (strain ATCC 25586 / DSM 15643 / BCRC 10681 / CIP 101130 / JCM 8532 / KCTC 2640 / LMG 13131 / VPI 4355)).